A 350-amino-acid chain; its full sequence is Beta-ketoacyl-[acyl-carrier-protein] synthase III (350 aa).

Catalysis depends on residues cysteine 120 and histidine 256. The segment at 257-261 (QANVR) is ACP-binding. Asparagine 286 is a catalytic residue.

This sequence belongs to the thiolase-like superfamily. FabH family. As to quaternary structure, homodimer.

It localises to the cytoplasm. The enzyme catalyses malonyl-[ACP] + acetyl-CoA + H(+) = 3-oxobutanoyl-[ACP] + CO2 + CoA. It functions in the pathway lipid metabolism; fatty acid biosynthesis. Catalyzes the condensation reaction of fatty acid synthesis by the addition to an acyl acceptor of two carbons from malonyl-ACP. Catalyzes the first condensation reaction which initiates fatty acid synthesis and may therefore play a role in governing the total rate of fatty acid production. Possesses both acetoacetyl-ACP synthase and acetyl transacylase activities. Its substrate specificity determines the biosynthesis of branched-chain and/or straight-chain of fatty acids. The protein is Beta-ketoacyl-[acyl-carrier-protein] synthase III of Deinococcus deserti (strain DSM 17065 / CIP 109153 / LMG 22923 / VCD115).